Reading from the N-terminus, the 125-residue chain is Histone H2A (125 aa).

The segment covering 1 to 18 (MSGRGKGGKAKAKAKSRS) has biased composition (basic residues). Residues 1 to 21 (MSGRGKGGKAKAKAKSRSSRA) are disordered. Ser-2 carries the N-acetylserine modification. N5-methylglutamine is present on Gln-104.

The protein belongs to the histone H2A family. The nucleosome is a histone octamer containing two molecules each of H2A, H2B, H3 and H4 assembled in one H3-H4 heterotetramer and two H2A-H2B heterodimers. The octamer wraps approximately 147 bp of DNA.

It is found in the nucleus. It localises to the chromosome. Functionally, core component of nucleosome. Nucleosomes wrap and compact DNA into chromatin, limiting DNA accessibility to the cellular machineries which require DNA as a template. Histones thereby play a central role in transcription regulation, DNA repair, DNA replication and chromosomal stability. DNA accessibility is regulated via a complex set of post-translational modifications of histones, also called histone code, and nucleosome remodeling. This Mytilus trossulus (Blue mussel) protein is Histone H2A.